The sequence spans 86 residues: Large ribosomal subunit protein uL23 (86 aa).

It belongs to the universal ribosomal protein uL23 family. In terms of assembly, part of the 50S ribosomal subunit. Contacts protein L29.

In terms of biological role, binds to 23S rRNA. One of the proteins that surrounds the polypeptide exit tunnel on the outside of the ribosome. This chain is Large ribosomal subunit protein uL23, found in Methanococcus maripaludis (strain C7 / ATCC BAA-1331).